The following is a 234-amino-acid chain: Large ribosomal subunit protein uL1 (234 aa).

It belongs to the universal ribosomal protein uL1 family. In terms of assembly, part of the 50S ribosomal subunit.

Functionally, binds directly to 23S rRNA. The L1 stalk is quite mobile in the ribosome, and is involved in E site tRNA release. In terms of biological role, protein L1 is also a translational repressor protein, it controls the translation of the L11 operon by binding to its mRNA. In Geobacter metallireducens (strain ATCC 53774 / DSM 7210 / GS-15), this protein is Large ribosomal subunit protein uL1.